The sequence spans 387 residues: Putative protein FAM157C (387 aa).

Disordered stretches follow at residues 1–21 (MGPLFTTIPGAHSGPMRPLPK), 182–226 (TARP…GAEP), and 329–353 (RARDPAPTNFPLKCQKQRGASTSSG).

This sequence belongs to the FAM157 family.

This is Putative protein FAM157C (FAM157C) from Homo sapiens (Human).